A 596-amino-acid polypeptide reads, in one-letter code: Polyphenol oxidase B, chloroplastic (596 aa).

Residues 1-23 (MASVVCNSSSSTTTTTLKTPFTS) form a disordered region. A chloroplast-targeting transit peptide spans 1–87 (MASVVCNSSS…ANAIPLAASA (87 aa)). The span at 8–23 (SSSSTTTTTLKTPFTS) shows a compositional bias: low complexity. 2 disulfide bridges follow: cysteine 98–cysteine 114 and cysteine 113–cysteine 182. The Cu cation site is built by histidine 181, histidine 199, histidine 208, histidine 329, histidine 333, and histidine 371. The 2'-(S-cysteinyl)-histidine (Cys-His) cross-link spans 185–199 (CNGAYIIGGKELQVH).

Belongs to the tyrosinase family. The cofactor is Cu(2+).

It localises to the plastid. The protein localises to the chloroplast thylakoid lumen. It catalyses the reaction 2 catechol + O2 = 2 1,2-benzoquinone + 2 H2O. Its function is as follows. Catalyzes the oxidation of mono- and o-diphenols to o-diquinones. The protein is Polyphenol oxidase B, chloroplastic of Solanum lycopersicum (Tomato).